A 400-amino-acid chain; its full sequence is Putative lysosomal acid lipase/cholesteryl ester hydrolase (400 aa).

The signal sequence occupies residues 1 to 17 (MWRLIIIAILFQGLVNS). Residues Asn-34, Asn-129, and Asn-159 are each glycosylated (N-linked (GlcNAc...) asparagine). Residues 78–378 (PAVFLQHGLL…EWEHLDFIWG (301 aa)) enclose the AB hydrolase-1 domain. Ser-172 serves as the catalytic Charge relay system. The N-linked (GlcNAc...) asparagine glycan is linked to Asn-271. His-372 (charge relay system) is an active-site residue.

The protein belongs to the AB hydrolase superfamily. Lipase family. Expressed by the venom gland.

Its subcellular location is the secreted. It catalyses the reaction a sterol ester + H2O = a sterol + a fatty acid + H(+). Its function is as follows. In physiological conditions, is crucial for intracellular hydrolysis of cholesteryl esters and triglycerides that have been internalized via receptor-mediated endocytosis of lipoprotein particles. In venom, the biological contribution is unknown. The protein is Putative lysosomal acid lipase/cholesteryl ester hydrolase of Crotalus adamanteus (Eastern diamondback rattlesnake).